A 358-amino-acid polypeptide reads, in one-letter code: Probable G-protein coupled receptor 25 (358 aa).

The Extracellular portion of the chain corresponds to 1-43 (MQSTEPWSPSWGTLSWDYSGSGSLDQVELCPAWNLPYGHAIIP). The helical transmembrane segment at 44–64 (ALYLAAFAVGLPGNAFVVWLL) threads the bilayer. At 65–76 (SRQRGPRRLVDT) the chain is on the cytoplasmic side. The chain crosses the membrane as a helical span at residues 77 to 97 (FVLHLAAADLGFVLTLPLWAA). The Extracellular segment spans residues 98 to 113 (AEARGGLWPFGDGLCK). Residues Cys112 and Cys191 are joined by a disulfide bond. A helical membrane pass occupies residues 114–134 (VSSFALAVTRCAGALLLAGMS). The Cytoplasmic segment spans residues 135–155 (VDRYLAVGRPLSARPLRSARC). The helical transmembrane segment at 156 to 176 (VRAVCGAAWAAAFLAGLPALL) threads the bilayer. The Extracellular portion of the chain corresponds to 177-200 (YRGLQPSLDGVGSQCAEEPWEALQ). A helical membrane pass occupies residues 201 to 221 (GVGLLLLLLTFALPLAVTLIC). The Cytoplasmic segment spans residues 222 to 239 (YWRVSRRLPRVGRARSNS). Residues 240–260 (LRIIFTVESVFVGCWLPFGVL) traverse the membrane as a helical segment. Residues 261-284 (RSLFHLARLQALPLPCSLLLALRW) lie on the Extracellular side of the membrane. Residues 285–307 (GLTVTTCLAFVNSSANPVIYLLL) form a helical membrane-spanning segment. The Cytoplasmic portion of the chain corresponds to 308 to 358 (DRSFRARARFGLCARAGRQVRRISSASSLSRDDSSVFRGRSPKVNSASATW). The disordered stretch occupies residues 339–358 (DDSSVFRGRSPKVNSASATW).

This sequence belongs to the G-protein coupled receptor 1 family.

The protein resides in the membrane. In terms of biological role, orphan receptor. This is Probable G-protein coupled receptor 25 (Gpr25) from Mus musculus (Mouse).